We begin with the raw amino-acid sequence, 215 residues long: Ribose-5-phosphate isomerase A (215 aa).

Substrate contacts are provided by residues 26-29 (TGST), 79-82 (DGAD), and 92-95 (KGGG). The active-site Proton acceptor is Glu101. Lys119 provides a ligand contact to substrate.

This sequence belongs to the ribose 5-phosphate isomerase family. As to quaternary structure, homodimer.

It catalyses the reaction aldehydo-D-ribose 5-phosphate = D-ribulose 5-phosphate. It functions in the pathway carbohydrate degradation; pentose phosphate pathway; D-ribose 5-phosphate from D-ribulose 5-phosphate (non-oxidative stage): step 1/1. Functionally, catalyzes the reversible conversion of ribose-5-phosphate to ribulose 5-phosphate. This Xanthomonas oryzae pv. oryzae (strain PXO99A) protein is Ribose-5-phosphate isomerase A.